A 126-amino-acid chain; its full sequence is Methylglyoxal synthase (126 aa).

The 126-residue stretch at 1-126 folds into the MGS-like domain; it reads MKALALIAHD…IAWIRKGTPQ (126 aa). Residues histidine 9, lysine 13, 35 to 38, and 55 to 56 contribute to the substrate site; these read TGTT and SG. Aspartate 61 functions as the Proton donor/acceptor in the catalytic mechanism. Histidine 88 lines the substrate pocket.

The protein belongs to the methylglyoxal synthase family.

It carries out the reaction dihydroxyacetone phosphate = methylglyoxal + phosphate. Functionally, catalyzes the formation of methylglyoxal from dihydroxyacetone phosphate. The protein is Methylglyoxal synthase of Thermus thermophilus (strain ATCC BAA-163 / DSM 7039 / HB27).